A 1179-amino-acid chain; its full sequence is Integrin alpha-7 (1179 aa).

A signal peptide spans Met-1–Ala-33. Residues Phe-34 to Glu-1076 lie on the Extracellular side of the membrane. FG-GAP repeat units lie at residues Val-38 to Cys-103, Arg-110 to Glu-175, Glu-185 to Leu-238, Asp-292 to Leu-349, Ile-350 to Asp-411, Ile-412 to Val-467, and Gln-471 to Arg-530. Asn-86 carries N-linked (GlcNAc...) asparagine glycosylation. Cystine bridges form between Cys-94–Cys-103, Cys-140–Cys-163, and Cys-184–Cys-197. The Ca(2+) site is built by Asp-372, Asn-374, Asp-376, Asp-380, Asp-434, Asn-436, Asp-438, Asp-442, Asp-492, Asp-494, Asn-496, Tyr-498, and Asp-500. 6 disulfides stabilise this stretch: Cys-539/Cys-546, Cys-552/Cys-615, Cys-681/Cys-687, Cys-781/Cys-792, Cys-939/Cys-993, and Cys-999/Cys-1004. N-linked (GlcNAc...) asparagine glycosylation occurs at Asn-784. Residues Ser-952–Gly-961 are compositionally biased toward basic and acidic residues. Residues Ser-952–Trp-978 are disordered. Asn-988 is a glycosylation site (N-linked (GlcNAc...) asparagine). N-linked (GlcNAc...) asparagine glycosylation is found at Asn-1023 and Asn-1043. A helical membrane pass occupies residues Gly-1077–Trp-1102. The Cytoplasmic segment spans residues Lys-1103–Ala-1179. The short motif at Gly-1105–Arg-1109 is the GFFKR motif element. The disordered stretch occupies residues Lys-1134–Gly-1153. Positions Gly-1139 to Glu-1152 are enriched in polar residues. A run of 3 repeats spans residues Asp-1155–Pro-1158, Asp-1163–Pro-1166, and Asp-1171–Pro-1174. Residues Asp-1155–Pro-1174 are 3 X 4 AA repeats of D-X-H-P.

The protein belongs to the integrin alpha chain family. Heterodimer of an alpha and a beta subunit. The alpha subunit is composed of a heavy and a light chain linked by a disulfide bond. Alpha-7 associates with beta-1. Interacts with COMP. Interacts (via C-terminus intracellular tail region) with CIB1; the interaction is stabilized/increased in a calcium- and magnesium-dependent manner. ADP-ribosylated on at least two sites of the extracellular domain in skeletal myotubes (in vitro). In terms of processing, no proteolytic cleavage to produce the 70 kDa form is seen due to the presence of a Gly instead of an arginine residue at position 647. In terms of tissue distribution, isoforms containing segment X2 are found in adult heart, lung and skeletal muscle. Isoforms containing segment X1 are expressed in adult heart, lung and in proliferating skeletal myoblasts but not in adult skeletal muscle. Isoforms containing segment a are exclusively found in skeletal muscle. Isoforms containing segment B are widely expressed. In muscle fibers isoforms containing segment A and B are expressed at myotendinous and neuromuscular junctions; isoforms containing segment C are expressed at neuromuscular junctions and at extrasynaptic sites.

It is found in the membrane. In terms of biological role, integrin alpha-7/beta-1 is the primary laminin receptor on skeletal myoblasts and adult myofibers. During myogenic differentiation, it may induce changes in the shape and mobility of myoblasts, and facilitate their localization at laminin-rich sites of secondary fiber formation. Involved in the maintenance of the myofibers cytoarchitecture as well as for their anchorage, viability and functional integrity. Mice carrying a ITGA7 null allele are viable and fertile, but show progressive muscular dystrophy starting soon after birth, but with a distinct variability in different muscle types. Required to promote contractile phenotype acquisition in differentiated airway smooth muscle (ASM) cells. Acts as a Schwann cell receptor for laminin-2. Acts as a receptor of COMP and mediates its effect on vascular smooth muscle cells (VSMCs) maturation. The sequence is that of Integrin alpha-7 (Itga7) from Mus musculus (Mouse).